Reading from the N-terminus, the 308-residue chain is MTELRRHAIDLDNFSATEIEEILETAESMREVLSREIKQVPALRGKTVVNMFFEESTRTRISFELAARALSANVVAFTARGSSVEKGESLVDTVRTLQALGADIIVMRHSQSGAPYLVARHFRGSLINAGDGRHAHPTQALLDLYTMQSRLGQIRDLHVVIVGDILHSRVVRSNLWGLTRLGARVTLCGPPTLIGPAAFWTATWPQVRIAYELDPLLPEADVVMALRLQKERMQSGLLPALREYTRIYGLTSERLARLPSHAIVMHPGPMNEGIEIFPEVATASPAVIEEQVTNGVAVRMALLYRMAG.

2 residues coordinate carbamoyl phosphate: arginine 58 and threonine 59. L-aspartate is bound at residue lysine 86. Arginine 108, histidine 136, and glutamine 139 together coordinate carbamoyl phosphate. L-aspartate-binding residues include arginine 169 and arginine 227. Residues glycine 268 and proline 269 each contribute to the carbamoyl phosphate site.

Belongs to the aspartate/ornithine carbamoyltransferase superfamily. ATCase family. Heterododecamer (2C3:3R2) of six catalytic PyrB chains organized as two trimers (C3), and six regulatory PyrI chains organized as three dimers (R2).

The enzyme catalyses carbamoyl phosphate + L-aspartate = N-carbamoyl-L-aspartate + phosphate + H(+). It functions in the pathway pyrimidine metabolism; UMP biosynthesis via de novo pathway; (S)-dihydroorotate from bicarbonate: step 2/3. Catalyzes the condensation of carbamoyl phosphate and aspartate to form carbamoyl aspartate and inorganic phosphate, the committed step in the de novo pyrimidine nucleotide biosynthesis pathway. The chain is Aspartate carbamoyltransferase catalytic subunit from Chloroflexus aurantiacus (strain ATCC 29366 / DSM 635 / J-10-fl).